Here is a 129-residue protein sequence, read N- to C-terminus: Large ribosomal subunit protein uL22 (129 aa).

This sequence belongs to the universal ribosomal protein uL22 family. Part of the 50S ribosomal subunit.

This protein binds specifically to 23S rRNA; its binding is stimulated by other ribosomal proteins, e.g. L4, L17, and L20. It is important during the early stages of 50S assembly. It makes multiple contacts with different domains of the 23S rRNA in the assembled 50S subunit and ribosome. Functionally, the globular domain of the protein is located near the polypeptide exit tunnel on the outside of the subunit, while an extended beta-hairpin is found that lines the wall of the exit tunnel in the center of the 70S ribosome. The chain is Large ribosomal subunit protein uL22 from Prochlorococcus marinus (strain MIT 9211).